A 162-amino-acid chain; its full sequence is Transcriptional repressor NrdR (162 aa).

The interval 1–21 (MNCPDCGNGRTRVIDTGASSD) is disordered. Residues 3-34 (CPDCGNGRTRVIDTGASSDGASVRRRRECQRC) fold into a zinc finger. In terms of domain architecture, ATP-cone spans 49–139 (LQVKKRDGTI…VYKAFSEPQE (91 aa)).

Belongs to the NrdR family. The cofactor is Zn(2+).

Negatively regulates transcription of bacterial ribonucleotide reductase nrd genes and operons by binding to NrdR-boxes. This is Transcriptional repressor NrdR from Natronomonas pharaonis (strain ATCC 35678 / DSM 2160 / CIP 103997 / JCM 8858 / NBRC 14720 / NCIMB 2260 / Gabara) (Halobacterium pharaonis).